The chain runs to 228 residues: ATP-dependent dethiobiotin synthetase BioD (228 aa).

14-19 (DAGKTL) lines the ATP pocket. Thr18 contributes to the Mg(2+) binding site. Lys39 is a catalytic residue. ATP-binding positions include Asp56, 117–120 (EGAG), and 206–208 (PRL). Positions 56 and 117 each coordinate Mg(2+).

It belongs to the dethiobiotin synthetase family. As to quaternary structure, homodimer. Mg(2+) is required as a cofactor.

The protein localises to the cytoplasm. The enzyme catalyses (7R,8S)-7,8-diammoniononanoate + CO2 + ATP = (4R,5S)-dethiobiotin + ADP + phosphate + 3 H(+). Its pathway is cofactor biosynthesis; biotin biosynthesis; biotin from 7,8-diaminononanoate: step 1/2. Functionally, catalyzes a mechanistically unusual reaction, the ATP-dependent insertion of CO2 between the N7 and N8 nitrogen atoms of 7,8-diaminopelargonic acid (DAPA, also called 7,8-diammoniononanoate) to form a ureido ring. This is ATP-dependent dethiobiotin synthetase BioD from Cellvibrio japonicus (strain Ueda107) (Pseudomonas fluorescens subsp. cellulosa).